Reading from the N-terminus, the 287-residue chain is Hydroxysteroid 11-beta-dehydrogenase 1-like protein (287 aa).

Positions 1–15 (MKVLLLTGLGALFFA) are cleaved as a signal peptide. Residues 36–62 (GVSA…TAHT), 87–88 (DM), and 114–116 (NHL) contribute to the NADP(+) site. Ser-165 is a binding site for substrate. Tyr-178 functions as the Proton acceptor in the catalytic mechanism. NADP(+)-binding positions include 178 to 182 (YSAAK) and 211 to 217 (GLRDRAS). N-linked (GlcNAc...) asparagine glycosylation occurs at Asn-280.

It belongs to the short-chain dehydrogenases/reductases (SDR) family.

It is found in the secreted. It catalyses the reaction cortisone + NADPH + H(+) = cortisol + NADP(+). Its function is as follows. Unidirectional NADP(+)-dependent cortisol dehydrogenase (in vitro). This is Hydroxysteroid 11-beta-dehydrogenase 1-like protein (HSD11B1L) from Bos taurus (Bovine).